The chain runs to 549 residues: Probable protein kinase UbiB (549 aa).

Positions 123-501 (DFDNTPLASA…QQKAHKSNYL (379 aa)) constitute a Protein kinase domain. Residues 129–137 (LASASISQV) and Lys152 each bind ATP. Asp287 (proton acceptor) is an active-site residue. Transmembrane regions (helical) follow at residues 498-518 (SNYLLITSAVLVICGTILFNQ) and 520-540 (ATLWASYGSITVGVVLWLLGW).

It belongs to the ABC1 family. UbiB subfamily.

Its subcellular location is the cell inner membrane. It participates in cofactor biosynthesis; ubiquinone biosynthesis [regulation]. In terms of biological role, is probably a protein kinase regulator of UbiI activity which is involved in aerobic coenzyme Q (ubiquinone) biosynthesis. In Shewanella woodyi (strain ATCC 51908 / MS32), this protein is Probable protein kinase UbiB.